The primary structure comprises 208 residues: NAD(P)H-quinone oxidoreductase subunit I (208 aa).

4Fe-4S ferredoxin-type domains follow at residues 55–84 and 95–124; these read GRIHYEFDKCIACEVCVRVCPINLPVVDWV and RNYSIDFGVCIFCGNCVEYCPTNCLSMTEE. Positions 64, 67, 70, 74, 104, 107, 110, and 114 each coordinate [4Fe-4S] cluster.

The protein belongs to the complex I 23 kDa subunit family. In terms of assembly, NDH-1 is composed of at least 11 different subunits. [4Fe-4S] cluster serves as cofactor.

Its subcellular location is the cellular thylakoid membrane. It carries out the reaction a plastoquinone + NADH + (n+1) H(+)(in) = a plastoquinol + NAD(+) + n H(+)(out). It catalyses the reaction a plastoquinone + NADPH + (n+1) H(+)(in) = a plastoquinol + NADP(+) + n H(+)(out). Its function is as follows. NDH-1 shuttles electrons from an unknown electron donor, via FMN and iron-sulfur (Fe-S) centers, to quinones in the respiratory and/or the photosynthetic chain. The immediate electron acceptor for the enzyme in this species is believed to be plastoquinone. Couples the redox reaction to proton translocation, and thus conserves the redox energy in a proton gradient. The protein is NAD(P)H-quinone oxidoreductase subunit I of Prochlorococcus marinus (strain MIT 9515).